The sequence spans 102 residues: Small ribosomal subunit protein uS10 (102 aa).

Belongs to the universal ribosomal protein uS10 family. In terms of assembly, part of the 30S ribosomal subunit.

Its function is as follows. Involved in the binding of tRNA to the ribosomes. This chain is Small ribosomal subunit protein uS10, found in Bartonella tribocorum (strain CIP 105476 / IBS 506).